The chain runs to 693 residues: Protein-glutamine gamma-glutamyltransferase E (693 aa).

An N-acetylalanine modification is found at A2. At Y111 the chain carries Phosphotyrosine. Residue T112 is modified to Phosphothreonine. Ca(2+)-binding residues include A222, N225, N227, D228, and N230. The active site involves C273. Ca(2+) is bound by residues D302, D304, N306, S308, and D325. Residues H331 and D354 contribute to the active site. Ca(2+) is bound by residues N394, S416, E444, and E449.

The protein belongs to the transglutaminase superfamily. Transglutaminase family. As to quaternary structure, consists of two polypeptide chains, which are synthesized as a precursor form of a single polypeptide. Ca(2+) serves as cofactor. In terms of processing, activated by proteolytic processing. In vitro activation is commonly achieved by cleavage with dispase, a neutral bacterial protease. Dispase cleavage site was proposed to lie between Ser-470 and Ser-471 or between Pro-465 and Phe-466. Physiological activation may be catalyzed by CTSL and, to a lesser extent, by CTSS, but not by CTSB, CTSD nor CTSV.

Its subcellular location is the cytoplasm. It carries out the reaction L-glutaminyl-[protein] + L-lysyl-[protein] = [protein]-L-lysyl-N(6)-5-L-glutamyl-[protein] + NH4(+). In terms of biological role, catalyzes the calcium-dependent formation of isopeptide cross-links between glutamine and lysine residues in various proteins, as well as the conjugation of polyamines to proteins. Involved in the formation of the cornified envelope (CE), a specialized component consisting of covalent cross-links of proteins beneath the plasma membrane of terminally differentiated keratinocytes. Catalyzes small proline-rich proteins (SPRR1 and SPRR2) and LOR cross-linking to form small interchain oligomers, which are further cross-linked by TGM1 onto the growing CE scaffold. In hair follicles, involved in cross-linking structural proteins to hardening the inner root sheath. This chain is Protein-glutamine gamma-glutamyltransferase E (TGM3), found in Homo sapiens (Human).